A 231-amino-acid polypeptide reads, in one-letter code: MAVTFSDLSSPAGLDSLDAYLLSRSYITGYQASKDDLTVFSAVPKASLASYVNVSRWYKHIDALLRISGVSGEGSGVTVEGNAPASDVATPPAADSKASAADDDDDDDVDLFGEETEEEKKAAEERAAAAAAKPAKKKESGKSSVLLDVKPWDDETDMKKLEEAVRSVQQEGLTLGASKLVPVGYGIKKLTIMMTIVDDLVSVDNLIEDYLTVEPINEYVQSCDIVAFNKI.

A disordered region spans residues 75-136; the sequence is SGVTVEGNAP…AAAAAAKPAK (62 aa). Acidic residues predominate over residues 101-117; the sequence is ADDDDDDDVDLFGEETE. Residues 118 to 127 show a composition bias toward basic and acidic residues; sequence EEKKAAEERA.

This sequence belongs to the EF-1-beta/EF-1-delta family. In terms of assembly, EF-1 is composed of 4 subunits: alpha, beta (1B-alpha=beta'), delta (1B-beta), and gamma (1B-gamma).

Its function is as follows. EF-1-beta and EF-1-beta' stimulate the exchange of GDP bound to EF-1-alpha to GTP. The protein is Elongation factor 1-delta of Beta vulgaris (Sugar beet).